The sequence spans 810 residues: LPS-assembly protein LptD (810 aa).

A signal peptide spans 1 to 29 (MTKRTLGYSYPIALTISLVPALTPAIVQA).

This sequence belongs to the LptD family. Component of the lipopolysaccharide transport and assembly complex. Interacts with LptE and LptA.

It is found in the cell outer membrane. Together with LptE, is involved in the assembly of lipopolysaccharide (LPS) at the surface of the outer membrane. The protein is LPS-assembly protein LptD of Aeromonas hydrophila subsp. hydrophila (strain ATCC 7966 / DSM 30187 / BCRC 13018 / CCUG 14551 / JCM 1027 / KCTC 2358 / NCIMB 9240 / NCTC 8049).